The primary structure comprises 174 residues: Probable nicotinate-nucleotide adenylyltransferase (174 aa).

The protein belongs to the NadD family.

It carries out the reaction nicotinate beta-D-ribonucleotide + ATP + H(+) = deamido-NAD(+) + diphosphate. Its pathway is cofactor biosynthesis; NAD(+) biosynthesis; deamido-NAD(+) from nicotinate D-ribonucleotide: step 1/1. Its function is as follows. Catalyzes the reversible adenylation of nicotinate mononucleotide (NaMN) to nicotinic acid adenine dinucleotide (NaAD). The chain is Probable nicotinate-nucleotide adenylyltransferase from Helicobacter pylori (strain HPAG1).